Consider the following 605-residue polypeptide: LysM domain receptor-like kinase 10 (605 aa).

A signal peptide spans 1-20; it reads MFSLPALLIGACAFAAAAVA. The Extracellular portion of the chain corresponds to 21–245; the sequence is ASGDGCRAGC…GMGNSLSGGA (225 aa). Cystine bridges form between Cys-26–Cys-89, Cys-30–Cys-161, and Cys-87–Cys-159. Asn-44 carries N-linked (GlcNAc...) asparagine glycosylation. Residues 115–121 and 142–148 each bind chitin; these read GGDTYDA and PPGRIPG. 2 N-linked (GlcNAc...) asparagine glycosylation sites follow: Asn-154 and Asn-158. The LysM domain maps to 174–221; it reads LTYPLWDGETLESVAAQYGFSSPAEMELIRRYNPGMGGVSGKGIVFIP. Asn-226 is a glycosylation site (N-linked (GlcNAc...) asparagine). Residues 246–266 form a helical membrane-spanning segment; sequence IAGIVIACIAIFIVAIWLIIM. The Cytoplasmic segment spans residues 267–605; sequence FYRWQKFRKA…DLRDMDYHPF (339 aa). Position 278 is a phosphoserine (Ser-278). The 275-residue stretch at 317–591 folds into the Protein kinase domain; the sequence is FSMEHKIGQG…RSVVVALMAL (275 aa). ATP contacts are provided by residues 323 to 331 and Lys-344; that span reads IGQGGFGSV. Asp-436 (proton acceptor) is an active-site residue.

Belongs to the protein kinase superfamily. Ser/Thr protein kinase family.

Its subcellular location is the cell membrane. The enzyme catalyses L-seryl-[protein] + ATP = O-phospho-L-seryl-[protein] + ADP + H(+). It catalyses the reaction L-threonyl-[protein] + ATP = O-phospho-L-threonyl-[protein] + ADP + H(+). This chain is LysM domain receptor-like kinase 10, found in Oryza sativa subsp. japonica (Rice).